The sequence spans 475 residues: Vasculin-like protein 1 (475 aa).

Phosphoserine occurs at positions 49 and 76. 2 disordered regions span residues 92-115 and 160-191; these read NLSGWHGSSRGHDGMSQRAGGSTG and PSLNPEAGKQNQPCRPIGTPSGVWENPPSAKQ. At Ser-202 the chain carries Phosphoserine. 2 disordered regions span residues 237–271 and 292–318; these read LVPKPAPPPSKPNAWKANRMEHKPGSLSSSREAAL and PKESPSSTTPPIEISSSRLTKLTRRTT. A compositionally biased stretch (low complexity) spans 294 to 311; that stretch reads ESPSSTTPPIEISSSRLT. Thr-300 is modified (phosphothreonine). Ser-383 bears the Phosphoserine mark. Residues 456–475 are disordered; the sequence is CEDSDTETSSSETSDDDAWK.

This sequence belongs to the vasculin family.

Its subcellular location is the nucleus. In terms of biological role, possible transcription factor. This Rattus norvegicus (Rat) protein is Vasculin-like protein 1 (Gpbp1l1).